Here is a 21-residue protein sequence, read N- to C-terminus: Cupiennin-6b (21 aa).

Residue S21 is modified to Serine amide.

In terms of tissue distribution, expressed by the venom gland.

The protein resides in the secreted. The polypeptide is Cupiennin-6b (Cupiennius salei (American wandering spider)).